A 308-amino-acid polypeptide reads, in one-letter code: Aspartate carbamoyltransferase catalytic subunit (308 aa).

Arg-59 and Thr-60 together coordinate carbamoyl phosphate. L-aspartate is bound at residue Lys-87. Carbamoyl phosphate contacts are provided by Arg-109, His-139, and Gln-142. Positions 172 and 224 each coordinate L-aspartate. Positions 265 and 266 each coordinate carbamoyl phosphate.

Belongs to the aspartate/ornithine carbamoyltransferase superfamily. ATCase family. As to quaternary structure, heterododecamer (2C3:3R2) of six catalytic PyrB chains organized as two trimers (C3), and six regulatory PyrI chains organized as three dimers (R2).

The catalysed reaction is carbamoyl phosphate + L-aspartate = N-carbamoyl-L-aspartate + phosphate + H(+). It functions in the pathway pyrimidine metabolism; UMP biosynthesis via de novo pathway; (S)-dihydroorotate from bicarbonate: step 2/3. Functionally, catalyzes the condensation of carbamoyl phosphate and aspartate to form carbamoyl aspartate and inorganic phosphate, the committed step in the de novo pyrimidine nucleotide biosynthesis pathway. This is Aspartate carbamoyltransferase catalytic subunit from Streptococcus thermophilus (strain ATCC BAA-491 / LMD-9).